Consider the following 233-residue polypeptide: Esterase FUS5 (233 aa).

Catalysis depends on charge relay system residues Ser-105, Asp-159, and His-187.

It belongs to the LovG family.

Esterase; part of the gene cluster that mediates the biosynthesis of the mycotoxin fusarin C. Within the cluster, FUS1, FUS2, FUS8 and FUS9 are sufficient for fusarin production. The other FUS cluster members are not essential for fusarin C biosynthesis. The sequence is that of Esterase FUS5 from Gibberella moniliformis (strain M3125 / FGSC 7600) (Maize ear and stalk rot fungus).